Consider the following 250-residue polypeptide: MAEIAPLRVQLIAKTEFSAPPDVPWSTDADGGAALVEFAGRACYQSWDKPNPRTATNAGYVRHIIDVGHFSVLEHASVSFYITGISRSCTHELIRHRHFSYSQLSQRYVPEHDSQVVAPPGIEDDPELLEIFTEAADAGRAAYTELLTRLEARLADQPNATLRRKQARQAARAVLPNATETRIVVTGNYRAWRHFIAMRASEHADLEIRRLAIECLRQLVDAAPQVFSDFEIVVLADGTEVATSPLATEV.

One can recognise a ThyX domain in the interval 7–233 (LRVQLIAKTE…PQVFSDFEIV (227 aa)). Residues S71, 95–97 (RHR), and Q103 each bind FAD. Residues 92–95 (ELIR), 103–107 (QLSQR), and R172 contribute to the dUMP site. The ThyX motif signature appears at 95 to 105 (RHRHFSYSQLS). FAD is bound by residues 188 to 190 (NYR) and H194. R199 is a binding site for dUMP. The active-site Involved in ionization of N3 of dUMP, leading to its activation is the R199.

Belongs to the thymidylate synthase ThyX family. In terms of assembly, homotetramer. FAD is required as a cofactor.

It catalyses the reaction dUMP + (6R)-5,10-methylene-5,6,7,8-tetrahydrofolate + NADPH + H(+) = dTMP + (6S)-5,6,7,8-tetrahydrofolate + NADP(+). Its pathway is pyrimidine metabolism; dTTP biosynthesis. Catalyzes the reductive methylation of 2'-deoxyuridine-5'-monophosphate (dUMP) to 2'-deoxythymidine-5'-monophosphate (dTMP) while utilizing 5,10-methylenetetrahydrofolate (mTHF) as the methyl donor, and NADPH and FADH(2) as the reductant. The protein is Flavin-dependent thymidylate synthase of Mycolicibacterium vanbaalenii (strain DSM 7251 / JCM 13017 / BCRC 16820 / KCTC 9966 / NRRL B-24157 / PYR-1) (Mycobacterium vanbaalenii).